Here is a 277-residue protein sequence, read N- to C-terminus: Large ribosomal subunit protein uL2 (277 aa).

Disordered regions lie at residues 1–20 (MGIRTFRPYTPGTRQASVSD), 27–55 (TQPEKSLTTYKHSSQGRNNRGVVTSRHRG), and 207–277 (KAGR…RNQS). The span at 27-48 (TQPEKSLTTYKHSSQGRNNRGV) shows a compositional bias: polar residues. 2 stretches are compositionally biased toward basic residues: residues 207-220 (KAGRSRHRGKRPHV) and 259-277 (TRNRKKASSKLIIRRRNQS).

It belongs to the universal ribosomal protein uL2 family. Part of the 50S ribosomal subunit. Forms a bridge to the 30S subunit in the 70S ribosome.

Its function is as follows. One of the primary rRNA binding proteins. Required for association of the 30S and 50S subunits to form the 70S ribosome, for tRNA binding and peptide bond formation. It has been suggested to have peptidyltransferase activity; this is somewhat controversial. Makes several contacts with the 16S rRNA in the 70S ribosome. The sequence is that of Large ribosomal subunit protein uL2 from Gloeothece citriformis (strain PCC 7424) (Cyanothece sp. (strain PCC 7424)).